A 182-amino-acid polypeptide reads, in one-letter code: UPF0397 protein YdcD (182 aa).

Transmembrane regions (helical) follow at residues 8 to 28 (IVVA…LINI), 42 to 62 (AVLA…IGFI), 74 to 94 (APWW…AFGV), 114 to 134 (IVQF…GDVL), and 146 to 166 (QGIV…TLLL).

The protein belongs to the UPF0397 family.

The protein resides in the cell membrane. The chain is UPF0397 protein YdcD (ydcD) from Lactococcus lactis subsp. lactis (strain IL1403) (Streptococcus lactis).